The sequence spans 710 residues: MTENEGNDKKIEGSNPKKKLNVVTFTGAAGLLGLAVSFAIFTFKSHKQKSKKKGLPGCDTVCVNLSAKEILDLAEEIIHKSTRVHDAVALVSLDKLSYENVVLPLAELEARQLSLIQCCVFPKMLSPHDNVRKASTEAEQKIDAHILSCRKREDVYRIIKIYAAKGESISPEAKCYLQCLVRDFEDNGLNLTAIKREEVERLKYEIDELSLRYIQNLNEDSSCLFFTEDELAGLPLEFLQNLEKTQNKEFKLTLESRHVAAILELCKIAKTRKTVAMAYGKRCGDTNIPVLQRLVQSRHRLACVCGYAHFADYALDRRMSKTSMRVIRFLEDISSSLTDLAIREFSILEDLKRKEEGEIPFGVEDLLYYIKRVEELQFDLDFGDIRQYFPVNLVLSGIFKICQDLFGIKFEEVTEVDVWYHDIRAFAVFDSGSGKLLGYFYLDMFTREGKCNHSCVVALQNNALFSNGACQIPVALLIAQFAKDGSGEAVPLGFSDVVNLFHEFGHVVQHICNRASFARFSGLRVDPDFREIPSQLLENWCYESFTLKLISGYRQDITKPLVDEVCKTLKRWRYSFSALKSLQEILYCLFDQIIYSDDDADLLQLIRSLHPKVMIGLPVVEGTNPASCFPRAVIGSEATCYSRLWSEVYAADIFASKFGDGHPNLYAGLQFRDKVLAPGGGKEPMELLTNFLGREPSTQAFIASRTNYSL.

Residue H502 coordinates Zn(2+). The active site involves E503. Residue H506 participates in Zn(2+) binding.

This sequence belongs to the peptidase M3 family. The cofactor is Zn(2+).

The protein resides in the cytoplasm. It carries out the reaction Preferential cleavage of bonds with hydrophobic residues at P1, P2 and P3' and a small residue at P1' in substrates of 5 to 15 residues.. In terms of biological role, involved in cytoplasmic peptide degradation. This chain is Probable thimet oligopeptidase, found in Arabidopsis thaliana (Mouse-ear cress).